A 237-amino-acid polypeptide reads, in one-letter code: Putative glutathione-dependent formaldehyde-activating enzyme (237 aa).

Positions 38-152 (ITLICHCPPS…LGQSGGSEGE (115 aa)) constitute a CENP-V/GFA domain. Positions 42, 44, 67, 69, 72, 114, and 117 each coordinate Zn(2+).

It belongs to the Gfa family. Zn(2+) is required as a cofactor.

It carries out the reaction S-(hydroxymethyl)glutathione = glutathione + formaldehyde. The protein operates within one-carbon metabolism; formaldehyde degradation; formate from formaldehyde (glutathione route): step 1/3. In terms of biological role, catalyzes the condensation of formaldehyde and glutathione to S-hydroxymethylglutathione. The protein is Putative glutathione-dependent formaldehyde-activating enzyme of Sordaria macrospora (strain ATCC MYA-333 / DSM 997 / K(L3346) / K-hell).